The primary structure comprises 154 residues: Proteinase inhibitor type-2 P303.51 (154 aa).

The signal sequence occupies residues 1 to 25 (MAVHKEVNFVAYLLIVLGLLVLVSA). 2 tandem repeats follow at residues 31 to 87 (AKAC…DPKK) and 88 to 147 (PKAC…DEPK). 8 cysteine pairs are disulfide-bonded: cysteine 34-cysteine 122, cysteine 38-cysteine 118, cysteine 46-cysteine 128, cysteine 58-cysteine 95, cysteine 61-cysteine 79, cysteine 62-cysteine 91, cysteine 68-cysteine 104, and cysteine 121-cysteine 139.

It belongs to the protease inhibitor I20 (potato type II proteinase inhibitor) family.

The chain is Proteinase inhibitor type-2 P303.51 from Solanum tuberosum (Potato).